A 256-amino-acid polypeptide reads, in one-letter code: Imidazole glycerol phosphate synthase subunit HisF (256 aa).

Residues aspartate 12 and aspartate 131 contribute to the active site.

It belongs to the HisA/HisF family. In terms of assembly, heterodimer of HisH and HisF.

The protein resides in the cytoplasm. The enzyme catalyses 5-[(5-phospho-1-deoxy-D-ribulos-1-ylimino)methylamino]-1-(5-phospho-beta-D-ribosyl)imidazole-4-carboxamide + L-glutamine = D-erythro-1-(imidazol-4-yl)glycerol 3-phosphate + 5-amino-1-(5-phospho-beta-D-ribosyl)imidazole-4-carboxamide + L-glutamate + H(+). It participates in amino-acid biosynthesis; L-histidine biosynthesis; L-histidine from 5-phospho-alpha-D-ribose 1-diphosphate: step 5/9. Functionally, IGPS catalyzes the conversion of PRFAR and glutamine to IGP, AICAR and glutamate. The HisF subunit catalyzes the cyclization activity that produces IGP and AICAR from PRFAR using the ammonia provided by the HisH subunit. The chain is Imidazole glycerol phosphate synthase subunit HisF from Pseudomonas paraeruginosa (strain DSM 24068 / PA7) (Pseudomonas aeruginosa (strain PA7)).